A 24-amino-acid chain; its full sequence is Lectin (24 aa).

Over residues Ala-1–Leu-18 the composition is skewed to polar residues. The interval Ala-1–Ala-24 is disordered.

This sequence belongs to the leguminous lectin family. As to quaternary structure, homotetramer.

This Crotalaria juncea (Sunn hemp) protein is Lectin.